The sequence spans 278 residues: MTKSFTKYHGLGNDFILIDNRHQLQPILTPEQAIELCDRNFGIGADGVIFALPGVKQTDYTMRIFNSDGSEPEMCGNGIRCLAKFIAELENNNKTKYNIHTGAGIIVPELQGDGQVTVDMGQPRLLASEIPTTLANADDKVVDQLLEVGGKSWFVTCVSMGNPHCITFVEDVTAIDLAKIGPKFEHNPVFPERTNTEFIQVISPKYVKMRVWERGAGATLACGTGACASVVAGVLTQNNERLVTVELPGGCLEIEWSTIDQKIYMTGPAEKVFTGIIA.

Substrate contacts are provided by Asn13 and Asn66. The active-site Proton donor is Cys75. Substrate is bound by residues 76-77, Asn162, Asn195, and 213-214; these read GN and ER. Cys222 functions as the Proton acceptor in the catalytic mechanism. Residue 223–224 coordinates substrate; the sequence is GT.

This sequence belongs to the diaminopimelate epimerase family. Homodimer.

The protein resides in the cytoplasm. It catalyses the reaction (2S,6S)-2,6-diaminopimelate = meso-2,6-diaminopimelate. It participates in amino-acid biosynthesis; L-lysine biosynthesis via DAP pathway; DL-2,6-diaminopimelate from LL-2,6-diaminopimelate: step 1/1. Its function is as follows. Catalyzes the stereoinversion of LL-2,6-diaminopimelate (L,L-DAP) to meso-diaminopimelate (meso-DAP), a precursor of L-lysine and an essential component of the bacterial peptidoglycan. The polypeptide is Diaminopimelate epimerase (Trichodesmium erythraeum (strain IMS101)).